A 150-amino-acid chain; its full sequence is Large ribosomal subunit protein uL13 (150 aa).

Positions 130–150 (EHPHAAQQPKTLQLDPAASAQ) are disordered.

Belongs to the universal ribosomal protein uL13 family. In terms of assembly, part of the 50S ribosomal subunit.

This protein is one of the early assembly proteins of the 50S ribosomal subunit, although it is not seen to bind rRNA by itself. It is important during the early stages of 50S assembly. The sequence is that of Large ribosomal subunit protein uL13 from Synechococcus sp. (strain CC9311).